The sequence spans 63 residues: Large ribosomal subunit protein bL28 (63 aa).

This sequence belongs to the bacterial ribosomal protein bL28 family.

This chain is Large ribosomal subunit protein bL28, found in Symbiobacterium thermophilum (strain DSM 24528 / JCM 14929 / IAM 14863 / T).